Consider the following 460-residue polypeptide: Chromosomal replication initiator protein DnaA 2 (460 aa).

The domain I, interacts with DnaA modulators stretch occupies residues 1–68; sequence MRAWEDFLLL…KTSLVNNNGK (68 aa). Residues 68 to 102 are domain II; that stretch reads KLIRVHITSLDKTAPFYKEKQIQQEKTAYFTMQYG. The tract at residues 103 to 321 is domain III, AAA+ region; the sequence is NVNPEMTFGN…DALKLLSKRV (219 aa). The ATP site is built by G151, G153, K154, and T155. The domain IV, binds dsDNA stretch occupies residues 322–460; that stretch reads AYKKLAQQLL…EFFPEEEISC (139 aa).

It belongs to the DnaA family. In terms of assembly, oligomerizes as a right-handed, spiral filament on DNA at oriC.

It localises to the cytoplasm. In terms of biological role, plays an essential role in the initiation and regulation of chromosomal replication. ATP-DnaA binds to the origin of replication (oriC) to initiate formation of the DNA replication initiation complex once per cell cycle. Binds the DnaA box (a 9 base pair repeat at the origin) and separates the double-stranded (ds)DNA. Forms a right-handed helical filament on oriC DNA; dsDNA binds to the exterior of the filament while single-stranded (ss)DNA is stabiized in the filament's interior. The ATP-DnaA-oriC complex binds and stabilizes one strand of the AT-rich DNA unwinding element (DUE), permitting loading of DNA polymerase. After initiation quickly degrades to an ADP-DnaA complex that is not apt for DNA replication. Binds acidic phospholipids. The protein is Chromosomal replication initiator protein DnaA 2 of Chlamydia caviae (strain ATCC VR-813 / DSM 19441 / 03DC25 / GPIC) (Chlamydophila caviae).